The chain runs to 215 residues: Probable GTP-binding protein EngB (215 aa).

Residues 30–204 (EGLEVAFAGR…QMVLAQWLGL (175 aa)) enclose the EngB-type G domain. GTP-binding positions include 38-45 (GRSNAGKS), 64-68 (GRTQL), 82-85 (DLPG), 149-152 (TKAD), and 182-185 (LFSA). Positions 45 and 66 each coordinate Mg(2+).

Belongs to the TRAFAC class TrmE-Era-EngA-EngB-Septin-like GTPase superfamily. EngB GTPase family. Mg(2+) serves as cofactor.

Functionally, necessary for normal cell division and for the maintenance of normal septation. This is Probable GTP-binding protein EngB from Pseudomonas aeruginosa (strain ATCC 15692 / DSM 22644 / CIP 104116 / JCM 14847 / LMG 12228 / 1C / PRS 101 / PAO1).